The sequence spans 343 residues: NADH dehydrogenase [ubiquinone] 1 alpha subcomplex subunit 10, mitochondrial (343 aa).

A mitochondrion-targeting transit peptide spans 1–23 (MALRLLRLVPPRVGGIHTSVQFK). At Lys-110 the chain carries N6-acetyllysine; alternate. An N6-succinyllysine; alternate modification is found at Lys-110. Ser-238 is modified (phosphoserine; by PINK1).

The protein belongs to the complex I NDUFA10 subunit family. Complex I is composed of 45 different subunits. This a component of the hydrophobic protein fraction. The cofactor is FAD. Post-translationally, phosphorylation at Ser-238 by PINK1 is required for the binding and/or reduction of the complex I substrate ubiquinone.

The protein resides in the mitochondrion matrix. Its function is as follows. Accessory subunit of the mitochondrial membrane respiratory chain NADH dehydrogenase (Complex I), that is believed not to be involved in catalysis. Complex I functions in the transfer of electrons from NADH to the respiratory chain. The immediate electron acceptor for the enzyme is believed to be ubiquinone. This is NADH dehydrogenase [ubiquinone] 1 alpha subcomplex subunit 10, mitochondrial (NDUFA10) from Bos taurus (Bovine).